A 31-amino-acid polypeptide reads, in one-letter code: Photosystem I reaction center subunit XII (31 aa).

A helical transmembrane segment spans residues 7-26; that stretch reads QIYIALLTALIPAFFALKLG.

This sequence belongs to the PsaM family.

It is found in the plastid. It localises to the chloroplast thylakoid membrane. In Euglena mutabilis, this protein is Photosystem I reaction center subunit XII.